A 944-amino-acid chain; its full sequence is Calcium-transporting ATPase type 2C member 2 (944 aa).

Residues 1–104 are Cytoplasmic-facing; the sequence is MGRRFKFLQK…DNTEPVWKKY (104 aa). Residues 69–93 form an interaction with ORAI1 region; the sequence is VDLDSGLSEFAVAQRRLVHGWNEFV. The chain crosses the membrane as a helical span at residues 105–125; it reads LDQFRNPLILLLLGSSVVSVL. Residues 126 to 127 lie on the Extracellular side of the membrane; it reads TK. The chain crosses the membrane as a helical span at residues 128–148; that stretch reads EYEDAISIALAVLIVVTVGFI. The Cytoplasmic portion of the chain corresponds to 149 to 229; it reads QEYRSEKSLE…EVEPCSKTDS (81 aa). A helical membrane pass occupies residues 230–250; that stretch reads PLAGGGDLSTLSNVVFMGTLV. Residues 251 to 291 are Extracellular-facing; that stretch reads QCGKGQGVVIGTGEQSQFGEVFKMMRAEETPKTPLQKSMDK. A Phosphothreonine modification is found at T262. Residue S266 is modified to Phosphoserine. Residues 292 to 312 traverse the membrane as a helical segment; that stretch reads LGKQLTVFSFGIIGLLMLVGW. At 313–329 the chain is on the cytoplasmic side; that stretch reads VQGKPLLSMFTIGVSLA. Ca(2+) contacts are provided by V330, A331, I333, and E335. The helical transmembrane segment at 330 to 350 threads the bilayer; that stretch reads VAAIPEGLPIVVMVTLVLGVL. At 351-748 the chain is on the extracellular side; that stretch reads RMAKKRVIVK…IAALSLITLS (398 aa). Catalysis depends on D377, which acts as the 4-aspartylphosphate intermediate. The Mg(2+) site is built by D672 and D676. A helical membrane pass occupies residues 749–769; that stretch reads TVCNLPNPLNAMQILWVNIIM. Ca(2+)-binding residues include N766 and D770. Over 770 to 802 the chain is Cytoplasmic; it reads DGPPAQSLGVEPVDRDALKRPPRSVKDTILNRA. Residues 803–823 traverse the membrane as a helical segment; that stretch reads LILKILMSAAVILGGTLFIFW. The Extracellular portion of the chain corresponds to 824 to 835; it reads REIPENRTSTPR. The chain crosses the membrane as a helical span at residues 836–853; the sequence is TTTMAFTCFVFFDLFNAL. Topologically, residues 854-872 are cytoplasmic; sequence SCRSQTKLIFEIGFFRNRM. Residues 873–893 form a helical membrane-spanning segment; that stretch reads FLYSILGSLLGQLAVIYAPPL. Residues 894-903 are Extracellular-facing; that stretch reads QKVFQTENLS. Residues 904–924 form a helical membrane-spanning segment; it reads ALDLLLLTGLASSVFILSELL. Topologically, residues 925–944 are cytoplasmic; the sequence is KLCEKFCSRAKADQMLPEAV.

Belongs to the cation transport ATPase (P-type) (TC 3.A.3) family. Type IIA subfamily. Interacts (via N-terminus) with ORAI1 (via N- and C-termini); this interaction regulates Ca(2+) influx at the plasma membrane.

Its subcellular location is the golgi apparatus. It localises to the trans-Golgi network membrane. It is found in the cell membrane. The protein resides in the basolateral cell membrane. The enzyme catalyses Ca(2+)(in) + ATP + H2O = Ca(2+)(out) + ADP + phosphate + H(+). It carries out the reaction Mn(2+)(in) + ATP + H2O = Mn(2+)(out) + ADP + phosphate + H(+). Functionally, ATP-driven pump that supplies the Golgi apparatus with Ca(2+) and Mn(2+) ions, both essential cofactors for processing and trafficking of newly synthesized proteins in the secretory pathway. Within a catalytic cycle, acquires Ca(2+) or Mn(2+) ions on the cytoplasmic side of the membrane and delivers them to the lumenal side. The transfer of ions across the membrane is coupled to ATP hydrolysis and is associated with a transient phosphorylation that shifts the pump conformation from inward-facing to outward-facing state. Induces Ca(2+) influx independently of its ATP-driven pump function. At the basolateral membrane of mammary epithelial cells, interacts with Ca(2+) channel ORAI1 and mediates Ca(2+) entry independently of the Ca(2+) content of endoplasmic reticulum or Golgi stores. May facilitate transepithelial transport of large quantities of Ca(2+) for milk secretion via activation of Ca(2+) influx channels at the plasma membrane and active Ca(2+) transport at the Golgi apparatus. This Rattus norvegicus (Rat) protein is Calcium-transporting ATPase type 2C member 2 (Atp2c2).